Consider the following 354-residue polypeptide: 3-isopropylmalate dehydrogenase (354 aa).

An NAD(+)-binding site is contributed by 74–87; it reads GPKWDDLPPEKRPE. Substrate-binding residues include Arg95, Arg105, Arg134, and Asp219. The Mg(2+) site is built by Asp219, Asp243, and Asp247. 275–287 is an NAD(+) binding site; it reads GSAPDIAGKNIAN.

The protein belongs to the isocitrate and isopropylmalate dehydrogenases family. LeuB type 1 subfamily. In terms of assembly, homodimer. Mg(2+) serves as cofactor. It depends on Mn(2+) as a cofactor.

It localises to the cytoplasm. The catalysed reaction is (2R,3S)-3-isopropylmalate + NAD(+) = 4-methyl-2-oxopentanoate + CO2 + NADH. The protein operates within amino-acid biosynthesis; L-leucine biosynthesis; L-leucine from 3-methyl-2-oxobutanoate: step 3/4. In terms of biological role, catalyzes the oxidation of 3-carboxy-2-hydroxy-4-methylpentanoate (3-isopropylmalate) to 3-carboxy-4-methyl-2-oxopentanoate. The product decarboxylates to 4-methyl-2 oxopentanoate. In Thermotoga maritima (strain ATCC 43589 / DSM 3109 / JCM 10099 / NBRC 100826 / MSB8), this protein is 3-isopropylmalate dehydrogenase (leuB).